We begin with the raw amino-acid sequence, 1086 residues long: NAD(P) transhydrogenase, mitochondrial (1086 aa).

Residues 1–43 (MANLLKTVVTGCSCPFLSNLGSCKVLPGKKNFLRTFHTHRILW) constitute a mitochondrion transit peptide. Over 44 to 474 (CSAPVKPGIP…TITPFRKTMT (431 aa)) the chain is Mitochondrial matrix. K70 carries the N6-acetyllysine modification. K117 is modified (N6-succinyllysine). 182–184 (RVT) lines the NAD(+) pocket. K224 is subject to N6-succinyllysine. NAD(+) is bound by residues V237, 257–259 (DTR), and G287. The residue at position 294 (K294) is an N6-succinyllysine. NAD(+) is bound by residues E300 and L319. K331 carries the N6-succinyllysine modification. K397 is subject to N6-acetyllysine. A run of 4 helical transmembrane segments spans residues 475-493 (SASVYTAGLTGILGLGIAA), 501-521 (MVTTFGLAGIVGYHTVWGVTP), 527-546 (LMSVTNAISGLTAVGGLVLM), and 558-578 (GLAALATFISSVNIAGGFLVT). The Mitochondrial matrix segment spans residues 579–595 (QRMLDMFKRPTDPPEYN). 5 helical membrane passes run 596-616 (YLYLLPAGTFVGGYLASLYSG), 622-642 (IMYLGSGLCCVGALAGLSTQG), 646-666 (LGNALGMIGVAGGLAATLGGL), 672-691 (LLAQMSGAMALGGTIGLTIA), and 702-722 (LVAAFHSLVGLAAVLTCIAEY). The Cytoplasmic segment spans residues 723-739 (IIEYPHFATDAAANLTK). 5 helical membrane-spanning segments follow: residues 740 to 760 (IVAYLGTYIGGVTFSGSLVAY), 778 to 797 (HLLNAGLLAGSVGGIIPFMM), 801 to 819 (FTTGITCLGSVSALSAVMG), 833 to 853 (VVITVLNSYSGWALCAEGFLL), and 857 to 879 (LLTIVGALIGSSGAILSYIMCVA). Residues 880 to 1086 (MNRSLANVIL…QAKVRESYQK (207 aa)) are Mitochondrial matrix-facing. NADP(+)-binding positions include Y933, 965 to 970 (VAGRMP), 1009 to 1011 (NDT), 1026 to 1027 (GM), 1042 to 1049 (KRSLGVGY), and 1068 to 1069 (DA). The residue at position 1079 (K1079) is an N6-succinyllysine.

This sequence in the N-terminal section; belongs to the AlaDH/PNT family. It in the C-terminal section; belongs to the PNT beta subunit family. In terms of assembly, homodimer.

The protein localises to the mitochondrion inner membrane. The enzyme catalyses NAD(+) + NADPH + H(+)(in) = NADH + NADP(+) + H(+)(out). Its function is as follows. The transhydrogenation between NADH and NADP is coupled to respiration and ATP hydrolysis and functions as a proton pump across the membrane. May play a role in reactive oxygen species (ROS) detoxification in the adrenal gland. In Bos taurus (Bovine), this protein is NAD(P) transhydrogenase, mitochondrial (NNT).